Here is a 130-residue protein sequence, read N- to C-terminus: MAKSIRKINLRKGKRRIPRGVTHIQASFNNTIITVTDVRGQVVSWSSAGACGFKGTKKSTPFAAQTAAENAIRILIDQGMKQAEVMISGPGPGRDTALRAIRRSGVVLSYVRDVTPIPHNGCRPPKKRRV.

It belongs to the universal ribosomal protein uS11 family. As to quaternary structure, part of the 30S ribosomal subunit.

It is found in the plastid. The protein localises to the chloroplast. This Anthoceros angustus (Hornwort) protein is Small ribosomal subunit protein uS11c.